The chain runs to 276 residues: Tumor necrosis factor-inducible gene 6 protein (276 aa).

An N-terminal signal peptide occupies residues 1–17 (MIILIYLFVLVWEEAQG). Residues 36–129 (GVYHREARSG…SERWDAYCYN (94 aa)) enclose the Link domain. 3 cysteine pairs are disulfide-bonded: cysteine 58/cysteine 127, cysteine 82/cysteine 103, and cysteine 135/cysteine 161. An N-linked (GlcNAc...) asparagine glycan is attached at asparagine 118. A CUB domain is found at 135–247 (CGGVFTDPKR…GGFQIKYVTV (113 aa)). Ca(2+) is bound by residues glutamate 183, aspartate 191, aspartate 232, serine 234, and valine 235. Cysteine 188 and cysteine 210 are joined by a disulfide. N-linked (GlcNAc...) asparagine glycosylation occurs at asparagine 258.

As to quaternary structure, interacts (via Link domain) with inter-alpha-inhibitor (I-alpha-I) component bikunin. Interacts with ITIH2/HC2; this interaction is required for transesterification of the HC to hyaluronan. Interacts (via Link and CUB domains) with ITIH1. Chondroitin sulfate may be required for the stability of the complex. Interacts (via Link domain) with various C-X-C and C-C chemokines including PF4, CXCL8, CXCL11, CXCL12, CCL2, CCL7, CCL19, CCL21, and CCL27; this interaction interferes with chemokine binding to glycosaminoglycans. Interacts (primarily via Link domain) with BMP2; this interaction is inhibited by hyaluronan. Interacts (via both Link and CUB domains) with TNFSF11. Interacts (via CUB domain) with FN1 (via type III repeats 9-14); this interaction enhances fibronectin fibril assembly. TNFAIP6 may act as a bridging molecule between FN1 and THBS1. In terms of tissue distribution, vascular smooth muscle cells.

It localises to the secreted. Major regulator of extracellular matrix organization during tissue remodeling. Catalyzes the transfer of a heavy chain (HC) from inter-alpha-inhibitor (I-alpha-I) complex to hyaluronan. Cleaves the ester bond between the C-terminus of the HC and GalNAc residue of the chondroitin sulfate chain in I-alpha-I complex followed by transesterification of the HC to hyaluronan. In the process, potentiates the antiprotease function of I-alpha-I complex through release of free bikunin. Acts as a catalyst in the formation of hyaluronan-HC oligomers and hyaluronan-rich matrix surrounding the cumulus cell-oocyte complex, a necessary step for oocyte fertilization. Assembles hyaluronan in pericellular matrices that serve as platforms for receptor clustering and signaling. Enables binding of hyaluronan deposited on the surface of macrophages to LYVE1 on lymphatic endothelium and facilitates macrophage extravasation. Alters hyaluronan binding to functionally latent CD44 on vascular endothelium, switching CD44 into an active state that supports leukocyte rolling. Modulates the interaction of chemokines with extracellular matrix components and proteoglycans on endothelial cell surface, likely preventing chemokine gradient formation. In a negative feedback mechanism, may limit excessive neutrophil recruitment at inflammatory sites by antagonizing the association of CXCL8 with glycosaminoglycans on vascular endothelium. Has a role in osteogenesis and bone remodeling. Inhibits BMP2-dependent differentiation of mesenchymal stem cell to osteoblasts. Protects against bone erosion during inflammation by inhibiting TNFSF11/RANKL-dependent osteoclast activation. In Oryctolagus cuniculus (Rabbit), this protein is Tumor necrosis factor-inducible gene 6 protein (TNFAIP6).